We begin with the raw amino-acid sequence, 251 residues long: 3-isopropylmalate dehydratase small subunit 1 (251 aa).

The transit peptide at 1-59 directs the protein to the chloroplast; that stretch reads MAASLQSANPTLSRTLASPNKPSSFATFRSPFLRFNSTSVASNFKPLVSREASSSFVTR.

The protein belongs to the LeuD family. In terms of assembly, heterodimer of the large LEUC/IIL1 subunit and the small LEUD (SSU1, SSU2 or SSU3) subunits. Expressed at low levels in roots, root tips, at the basis of the hypocotyls, and in emerging leaves. In young seedlings, expressed in cotyledon epidermal cells. In hypocotyls, expressed in peripheral cells. In seedling roots, expressed in the epidermis, including root hairs, and throughout the cortex. In rosette leaves, expressed in the upper and lower epidermis. In roots of adult plants, expressed in the root tips and cortex of the mature root enclosing the stele. In flowering stalks, expressed in the epidermis. Expressed in the carpel epidermis.

It is found in the plastid. The protein localises to the chloroplast stroma. It carries out the reaction (2R,3S)-3-isopropylmalate = (2S)-2-isopropylmalate. Its pathway is amino-acid biosynthesis; L-leucine biosynthesis; L-leucine from 3-methyl-2-oxobutanoate: step 2/4. Functionally, catalyzes the isomerization between 2-isopropylmalate and 3-isopropylmalate, via the formation of 2-isopropylmaleate. Plays an essential role in leucine biosynthesis. Functions in both the biosynthesis of leucine, and in the methionine chain elongation pathway of aliphatic glucosinolate formation. Plays an essential role in female gametophyte development. This chain is 3-isopropylmalate dehydratase small subunit 1, found in Arabidopsis thaliana (Mouse-ear cress).